The primary structure comprises 754 residues: Lysyl oxidase homolog 3 (754 aa).

The signal sequence occupies residues 1-26 (MRAVSVWYCCPWGLLLLHCLCSFSVG). 4 SRCR domains span residues 45–146 (FRLA…VICK), 170–283 (VRLR…VSCV), 308–408 (VRLK…VRCN), and 418–526 (IRLS…VICS). 17 disulfides stabilise this stretch: Cys71–Cys135, Cys84–Cys145, Cys115–Cys125, Cys202–Cys272, Cys215–Cys282, Cys249–Cys259, Cys333–Cys397, Cys346–Cys407, Cys377–Cys387, Cys447–Cys512, Cys460–Cys525, Cys493–Cys503, Cys555–Cys561, Cys607–Cys655, Cys639–Cys645, Cys667–Cys677, and Cys714–Cys728. The N-linked (GlcNAc...) asparagine glycan is linked to Asn112. Asn267 carries an N-linked (GlcNAc...) asparagine glycan. N-linked (GlcNAc...) asparagine glycans are attached at residues Asn391 and Asn482. A lysyl-oxidase like region spans residues 530–733 (SDLLLHSALV…WVHNCHIGDA (204 aa)). 3 residues coordinate Cu cation: His608, His610, and His612. Asn626 is a glycosylation site (N-linked (GlcNAc...) asparagine). Positions 635–671 (KASFCLEDTECQEDVSKRYECANFGEQGITVGCWDLY) form a cross-link, lysine tyrosylquinone (Lys-Tyr). At Tyr671 the chain carries 2',4',5'-topaquinone.

This sequence belongs to the lysyl oxidase family. It depends on Cu cation as a cofactor. Lysine tyrosylquinone residue serves as cofactor. The lysine tyrosylquinone cross-link (LTQ) is generated by condensation of the epsilon-amino group of a lysine with a topaquinone produced by oxidation of tyrosine. As to expression, expressed in palate: predominantly present in the palate mesenchyme and tongue (at protein level). In spine, expressed in the original intervertebral disk, cartilage primordia, anterior and posterior longitudinal ligaments, meninges of spinal cord, lung and heart. In eyes, strongly expressed in the skin of the eyelid and weakly expressed in the cornea and sclera. In lung, predominantly expressed in the pulmonary mesenchyme. In developing muscle, expressed at myofiber ends (at protein level).

The protein localises to the secreted. It is found in the extracellular space. It localises to the cytoplasm. The protein resides in the nucleus. The catalysed reaction is L-lysyl-[protein] + O2 + H2O = (S)-2-amino-6-oxohexanoyl-[protein] + H2O2 + NH4(+). The enzyme catalyses N(6)-acetyl-L-lysyl-[protein] + O2 + H2O = acetamide + (S)-2-amino-6-oxohexanoyl-[protein] + H2O2. Its function is as follows. Protein-lysine 6-oxidase that mediates the oxidation of peptidyl lysine residues to allysine in target proteins. Catalyzes the post-translational oxidative deamination of peptidyl lysine residues in precursors of elastin and different types of collagens, a prerequisite in the formation of cross-links between collagens and elastin. Required for somite boundary formation by catalyzing oxidation of fibronectin (FN1), enhancing integrin signaling in myofibers and their adhesion to the myotendinous junction (MTJ). Acts as a regulator of inflammatory response by inhibiting differentiation of naive CD4(+) T-cells into T-helper Th17 or regulatory T-cells (Treg): acts by interacting with STAT3 in the nucleus and catalyzing both deacetylation and oxidation of lysine residues on STAT3, leading to disrupt STAT3 dimerization and inhibit STAT3 transcription activity. Oxidation of lysine residues to allysine on STAT3 preferentially takes place on lysine residues that are acetylated. Also able to catalyze deacetylation of lysine residues on STAT3. The sequence is that of Lysyl oxidase homolog 3 from Mus musculus (Mouse).